Here is a 356-residue protein sequence, read N- to C-terminus: Glutamine synthetase cytosolic isozyme (356 aa).

A GS beta-grasp domain is found at 19–99 (IIAEYIWIGG…VMCDAYTPAG (81 aa)). The segment at 38–66 (RTLPGPVTDPSQLPKWNYDGSSTGQAPGE) is disordered. The GS catalytic domain occupies 106–356 (KRHAAAKIFS…IADTTILWKP (251 aa)).

It belongs to the glutamine synthetase family. Homooctamer.

The protein localises to the cytoplasm. The catalysed reaction is L-glutamate + NH4(+) + ATP = L-glutamine + ADP + phosphate + H(+). In Medicago sativa (Alfalfa), this protein is Glutamine synthetase cytosolic isozyme.